The sequence spans 869 residues: Synaptonemal complex protein ZEP1 (869 aa).

Coiled-coil stretches lie at residues threonine 64–threonine 298, histidine 330–tyrosine 614, and arginine 641–methionine 713. Residues glycine 841–glycine 869 are disordered.

As to quaternary structure, interacts with CRC1. As to expression, highly expressed in panicles.

It is found in the nucleus. The protein localises to the chromosome. Required for chromosome synapsis and regulates crossover frequency during meiosis. Acts as a transverse filament protein and constitutes the central element of the synaptonemal complex. This Oryza sativa subsp. japonica (Rice) protein is Synaptonemal complex protein ZEP1 (ZEP1).